Reading from the N-terminus, the 199-residue chain is Holliday junction branch migration complex subunit RuvA (199 aa).

The interval 1-63 (MIGKLNGKID…EEHIHLYGFL (63 aa)) is domain I. The interval 64 to 141 (TLEEKNFFNL…TKIFSSSAII (78 aa)) is domain II. The segment at 141 to 145 (IKDSN) is flexible linker. The segment at 146–199 (ISSIAINEVMKALVNLGFTRFEAQNTVQGIITQNPKISIDELIKTALKNRNSSF) is domain III.

Belongs to the RuvA family. As to quaternary structure, homotetramer. Forms an RuvA(8)-RuvB(12)-Holliday junction (HJ) complex. HJ DNA is sandwiched between 2 RuvA tetramers; dsDNA enters through RuvA and exits via RuvB. An RuvB hexamer assembles on each DNA strand where it exits the tetramer. Each RuvB hexamer is contacted by two RuvA subunits (via domain III) on 2 adjacent RuvB subunits; this complex drives branch migration. In the full resolvosome a probable DNA-RuvA(4)-RuvB(12)-RuvC(2) complex forms which resolves the HJ.

Its subcellular location is the cytoplasm. Its function is as follows. The RuvA-RuvB-RuvC complex processes Holliday junction (HJ) DNA during genetic recombination and DNA repair, while the RuvA-RuvB complex plays an important role in the rescue of blocked DNA replication forks via replication fork reversal (RFR). RuvA specifically binds to HJ cruciform DNA, conferring on it an open structure. The RuvB hexamer acts as an ATP-dependent pump, pulling dsDNA into and through the RuvAB complex. HJ branch migration allows RuvC to scan DNA until it finds its consensus sequence, where it cleaves and resolves the cruciform DNA. The polypeptide is Holliday junction branch migration complex subunit RuvA (Rickettsia prowazekii (strain Madrid E)).